A 232-amino-acid chain; its full sequence is 6-phosphogluconolactonase (232 aa).

This sequence belongs to the glucosamine/galactosamine-6-phosphate isomerase family. 6-phosphogluconolactonase subfamily.

It catalyses the reaction 6-phospho-D-glucono-1,5-lactone + H2O = 6-phospho-D-gluconate + H(+). It participates in carbohydrate degradation; pentose phosphate pathway; D-ribulose 5-phosphate from D-glucose 6-phosphate (oxidative stage): step 2/3. Hydrolysis of 6-phosphogluconolactone to 6-phosphogluconate. In Aggregatibacter actinomycetemcomitans (Actinobacillus actinomycetemcomitans), this protein is 6-phosphogluconolactonase (pgl).